Here is a 249-residue protein sequence, read N- to C-terminus: Proteasome activator complex subunit 1 (249 aa).

The interval 60–101 is disordered; the sequence is PLDIPVPDPVKEKEKGERKKQQEKEDKDEKKKGEDEDKGPPC. Residues 68-98 are compositionally biased toward basic and acidic residues; it reads PVKEKEKGERKKQQEKEDKDEKKKGEDEDKG.

This sequence belongs to the PA28 family. In terms of assembly, heterodimer of PSME1 and PSME2, which forms a hexameric ring. PSME1 can form homoheptamers.

Its function is as follows. Implicated in immunoproteasome assembly and required for efficient antigen processing. The PA28 activator complex enhances the generation of class I binding peptides by altering the cleavage pattern of the proteasome. The chain is Proteasome activator complex subunit 1 (PSME1) from Macaca fascicularis (Crab-eating macaque).